A 375-amino-acid chain; its full sequence is DNA replication and repair protein RecF (375 aa).

30–37 (GENAQGKT) contributes to the ATP binding site.

This sequence belongs to the RecF family.

It is found in the cytoplasm. The RecF protein is involved in DNA metabolism; it is required for DNA replication and normal SOS inducibility. RecF binds preferentially to single-stranded, linear DNA. It also seems to bind ATP. This Bacillus cereus (strain ZK / E33L) protein is DNA replication and repair protein RecF.